The chain runs to 506 residues: Maturase K (506 aa).

It belongs to the intron maturase 2 family. MatK subfamily.

It is found in the plastid. It localises to the chloroplast. Usually encoded in the trnK tRNA gene intron. Probably assists in splicing its own and other chloroplast group II introns. The polypeptide is Maturase K (Trifolium striatum (Knotted clover)).